A 475-amino-acid polypeptide reads, in one-letter code: Subtilisin-like protease PopC (475 aa).

Disordered stretches follow at residues methionine 1–glutamate 27 and threonine 57–alanine 106. Residues asparagine 165–arginine 475 enclose the Peptidase S8 domain. Active-site charge relay system residues include aspartate 201, histidine 243, and serine 423.

The protein belongs to the peptidase S8 family. In terms of assembly, interacts with PopD in non-starving cells.

It is found in the cytoplasm. Its subcellular location is the periplasm. The protein localises to the secreted. With respect to regulation, in non-starving cells, secretion and protease activity are inhibited by formation of a cytoplasmic complex with PopD. In response to starvation, PopD is degraded in a RelA- and FtsH(D)-dependent manner, thereby releasing pre-formed PopC for secretion. Secreted and active during starvation, and rapidly degraded upon secretion. Secretion is significantly and reversibly reduced by carbonyl cyanide m-chlorophenyl hydrazine (CCCP), which dissipates or reduces the proton motive force (PMF), and by nigericin, which affects the pH gradient. Its function is as follows. Required for fruiting body formation, a multicellular developmental program that is induced in response to starvation. Acts as a subtilisin-like protease that directly cleaves the CsgA precursor protein (p25) on the cell surface to generate the intercellular C-signal protein (p17) in starving cells. Preferentially acts in cis, i.e. PopC secreted by a cell only cleaves p25 on that cell. May also be important for processing of other protein(s) that are important for development. This chain is Subtilisin-like protease PopC, found in Myxococcus xanthus (strain DK1622).